Reading from the N-terminus, the 321-residue chain is Ferredoxin--NADP reductase (321 aa).

FAD contacts are provided by glutamate 33, glutamine 41, tyrosine 46, valine 86, leucine 119, aspartate 277, and serine 318.

The protein belongs to the ferredoxin--NADP reductase type 2 family. As to quaternary structure, homodimer. Requires FAD as cofactor.

It catalyses the reaction 2 reduced [2Fe-2S]-[ferredoxin] + NADP(+) + H(+) = 2 oxidized [2Fe-2S]-[ferredoxin] + NADPH. This Lactococcus lactis subsp. cremoris (strain SK11) protein is Ferredoxin--NADP reductase.